The primary structure comprises 571 residues: Phosphoribosylaminoimidazole carboxylase (571 aa).

Ser-37 carries the phosphoserine modification. In terms of domain architecture, ATP-grasp spans 110–298 (KEHLIKNGIA…QFEAHLRSIL (189 aa)). 138–193 (GRDLGFPFVLKSRTLAYDGRGNFVVKNKEMIPEALEVLKDRPLYAEKWAPFTKELA) lines the ATP pocket.

It in the C-terminal section; belongs to the AIR carboxylase family. Class I subfamily.

It catalyses the reaction 5-amino-1-(5-phospho-D-ribosyl)imidazole-4-carboxylate + H(+) = 5-amino-1-(5-phospho-beta-D-ribosyl)imidazole + CO2. It functions in the pathway purine metabolism; IMP biosynthesis via de novo pathway; 5-amino-1-(5-phospho-D-ribosyl)imidazole-4-carboxylate from 5-amino-1-(5-phospho-D-ribosyl)imidazole (carboxylase route): step 1/1. The protein is Phosphoribosylaminoimidazole carboxylase (ADE2) of Saccharomyces cerevisiae (strain ATCC 204508 / S288c) (Baker's yeast).